Consider the following 690-residue polypeptide: Elongation factor G (690 aa).

A tr-type G domain is found at 8–283 (ERYRNFGIMA…AVVDFMPSPL (276 aa)). GTP-binding positions include 17 to 24 (AHIDAGKT), 81 to 85 (DTPGH), and 135 to 138 (NKLD).

It belongs to the TRAFAC class translation factor GTPase superfamily. Classic translation factor GTPase family. EF-G/EF-2 subfamily.

Its subcellular location is the cytoplasm. Functionally, catalyzes the GTP-dependent ribosomal translocation step during translation elongation. During this step, the ribosome changes from the pre-translocational (PRE) to the post-translocational (POST) state as the newly formed A-site-bound peptidyl-tRNA and P-site-bound deacylated tRNA move to the P and E sites, respectively. Catalyzes the coordinated movement of the two tRNA molecules, the mRNA and conformational changes in the ribosome. In Novosphingobium aromaticivorans (strain ATCC 700278 / DSM 12444 / CCUG 56034 / CIP 105152 / NBRC 16084 / F199), this protein is Elongation factor G.